The sequence spans 301 residues: Securin (301 aa).

Disordered regions lie at residues 1-55, 82-120, and 218-284; these read MLPR…RTVL, DSPT…DTPL, and ASDQ…RSIH. The D-box 1 signature appears at 33–36; that stretch reads RAPL. A compositionally biased stretch (polar residues) spans 38 to 50; the sequence is STKQSNAPSSVTV. The short motif at 52–55 is the D-box 2 element; the sequence is RTVL. Polar residues-rich tracts occupy residues 88–98, 110–119, and 231–245; these read EPNSQGISRSA, PRRSSLTDTP, and VSKQ…STVY. 2 repeats span residues 250 to 260 and 270 to 280; these read ASGKSIPRPLS and ASGNSRRRPLS.

The protein belongs to the securin family. Interacts with the caspase-like cut1, and prevents its protease activity probably by covering its active site. Post-translationally, ubiquitinated by the anaphase promoting complex (APC) at the onset of anaphase, conducting to its degradation.

The protein localises to the cytoplasm. The protein resides in the nucleus. Functionally, regulatory protein, which plays a central role in chromosome stability. Probably acts by blocking the action of key proteins. During the mitosis, it blocks separase/cut1 function, preventing the proteolysis of the cohesin complex and the subsequent segregation of the chromosomes. At the onset of anaphase, it is ubiquitinated, conducting to its destruction and to the liberation of cut1. The chain is Securin (cut2) from Schizosaccharomyces pombe (strain 972 / ATCC 24843) (Fission yeast).